Consider the following 500-residue polypeptide: Pyoverdin chromophore biosynthetic protein PvcC (500 aa).

It depends on FAD as a cofactor.

It participates in siderophore biosynthesis; pyoverdin biosynthesis. The chain is Pyoverdin chromophore biosynthetic protein PvcC (pvcC) from Pseudomonas aeruginosa (strain ATCC 15692 / DSM 22644 / CIP 104116 / JCM 14847 / LMG 12228 / 1C / PRS 101 / PAO1).